The following is a 155-amino-acid chain: Large ribosomal subunit protein uL11 (155 aa).

It belongs to the universal ribosomal protein uL11 family. As to quaternary structure, part of the ribosomal stalk of the 50S ribosomal subunit. Interacts with L10 and the large rRNA to form the base of the stalk. L10 forms an elongated spine to which L12 dimers bind in a sequential fashion forming a multimeric L10(L12)X complex.

In terms of biological role, forms part of the ribosomal stalk which helps the ribosome interact with GTP-bound translation factors. This Picrophilus torridus (strain ATCC 700027 / DSM 9790 / JCM 10055 / NBRC 100828 / KAW 2/3) protein is Large ribosomal subunit protein uL11.